A 642-amino-acid chain; its full sequence is Threonine--tRNA ligase (642 aa).

A TGS domain is found at 1 to 61; that stretch reads MPVITLPDGS…ENDATLSIIT (61 aa). Residues 243–534 are catalytic; it reads DHRKIGKQLD…LTEEFAGFFP (292 aa). 3 residues coordinate Zn(2+): Cys334, His385, and His511.

Belongs to the class-II aminoacyl-tRNA synthetase family. In terms of assembly, homodimer. The cofactor is Zn(2+).

The protein localises to the cytoplasm. The catalysed reaction is tRNA(Thr) + L-threonine + ATP = L-threonyl-tRNA(Thr) + AMP + diphosphate + H(+). Its function is as follows. Catalyzes the attachment of threonine to tRNA(Thr) in a two-step reaction: L-threonine is first activated by ATP to form Thr-AMP and then transferred to the acceptor end of tRNA(Thr). Also edits incorrectly charged L-seryl-tRNA(Thr). This is Threonine--tRNA ligase from Salmonella agona (strain SL483).